A 513-amino-acid chain; its full sequence is Light-independent protochlorophyllide reductase subunit B (513 aa).

Asp-36 is a [4Fe-4S] cluster binding site. The active-site Proton donor is Asp-299. 434 to 435 (GM) lines the substrate pocket.

Belongs to the ChlB/BchB/BchZ family. As to quaternary structure, protochlorophyllide reductase is composed of three subunits; ChlL, ChlN and ChlB. Forms a heterotetramer of two ChlB and two ChlN subunits. Requires [4Fe-4S] cluster as cofactor.

It is found in the plastid. The protein resides in the chloroplast. The catalysed reaction is chlorophyllide a + oxidized 2[4Fe-4S]-[ferredoxin] + 2 ADP + 2 phosphate = protochlorophyllide a + reduced 2[4Fe-4S]-[ferredoxin] + 2 ATP + 2 H2O. Its pathway is porphyrin-containing compound metabolism; chlorophyll biosynthesis (light-independent). Its function is as follows. Component of the dark-operative protochlorophyllide reductase (DPOR) that uses Mg-ATP and reduced ferredoxin to reduce ring D of protochlorophyllide (Pchlide) to form chlorophyllide a (Chlide). This reaction is light-independent. The NB-protein (ChlN-ChlB) is the catalytic component of the complex. In Anthoceros angustus (Hornwort), this protein is Light-independent protochlorophyllide reductase subunit B.